Reading from the N-terminus, the 495-residue chain is Probable leucine aminopeptidase 2 (495 aa).

Residues 1–21 (MKSQLLSLAVAVTTISQGVVG) form the signal peptide. The PA domain maps to 130–216 (MAELVVAKNN…SQEDGKNLAT (87 aa)). Residues N142 and N235 are each glycosylated (N-linked (GlcNAc...) asparagine). Positions 259 and 271 each coordinate Zn(2+). The N-linked (GlcNAc...) asparagine glycan is linked to N272. The active-site Proton acceptor is the E303. The Zn(2+) site is built by E304 and D332. N352 carries N-linked (GlcNAc...) asparagine glycosylation. Residue H430 participates in Zn(2+) binding.

This sequence belongs to the peptidase M28 family. M28A subfamily. In terms of assembly, monomer. Requires Zn(2+) as cofactor.

The protein localises to the secreted. In terms of biological role, extracellular aminopeptidase that releases a wide variety of amino acids from natural peptides and contributes to pathogenicity. The chain is Probable leucine aminopeptidase 2 (LAP2) from Trichophyton verrucosum (strain HKI 0517).